Here is a 418-residue protein sequence, read N- to C-terminus: Creatine kinase U-type, mitochondrial (418 aa).

The transit peptide at 1 to 39 (MAGPFSRLLSARPGLRLLALAGAGSLTAGILLRPESVGA) directs the protein to the mitochondrion. The segment at 40 to 64 (AAAERRRLYPPSAEYPDLRKHNNCM) is cardiolipin-binding. In terms of domain architecture, Phosphagen kinase N-terminal spans 46 to 132 (RLYPPSAEYP…FDPVIQERHN (87 aa)). Residue serine 152 is modified to Phosphoserine. The Phosphagen kinase C-terminal domain maps to 159–401 (YVLSSRVRTG…NYLIDCERRL (243 aa)). 162 to 166 (SSRVR) provides a ligand contact to ATP. Position 197 is a phosphoserine (serine 197). Threonine 214 bears the Phosphothreonine mark. ATP is bound at residue histidine 225. A Phosphoserine modification is found at serine 233. ATP is bound by residues arginine 270, arginine 326, and 354 to 359 (RGTGGV). Threonine 356 is modified (phosphothreonine). The residue at position 366 (serine 366) is a Phosphoserine. An ATP-binding site is contributed by aspartate 369.

It belongs to the ATP:guanido phosphotransferase family. In terms of assembly, exists as an octamer composed of four MTCK homodimers.

It localises to the mitochondrion inner membrane. The enzyme catalyses creatine + ATP = N-phosphocreatine + ADP + H(+). Reversibly catalyzes the transfer of phosphate between ATP and various phosphogens (e.g. creatine phosphate). Creatine kinase isoenzymes play a central role in energy transduction in tissues with large, fluctuating energy demands, such as skeletal muscle, heart, brain and spermatozoa. The polypeptide is Creatine kinase U-type, mitochondrial (Ckmt1) (Mus musculus (Mouse)).